Reading from the N-terminus, the 248-residue chain is 3-deoxy-manno-octulosonate cytidylyltransferase (248 aa).

This sequence belongs to the KdsB family.

The protein resides in the cytoplasm. The catalysed reaction is 3-deoxy-alpha-D-manno-oct-2-ulosonate + CTP = CMP-3-deoxy-beta-D-manno-octulosonate + diphosphate. Its pathway is nucleotide-sugar biosynthesis; CMP-3-deoxy-D-manno-octulosonate biosynthesis; CMP-3-deoxy-D-manno-octulosonate from 3-deoxy-D-manno-octulosonate and CTP: step 1/1. The protein operates within bacterial outer membrane biogenesis; lipopolysaccharide biosynthesis. Its function is as follows. Activates KDO (a required 8-carbon sugar) for incorporation into bacterial lipopolysaccharide in Gram-negative bacteria. The chain is 3-deoxy-manno-octulosonate cytidylyltransferase from Escherichia fergusonii (strain ATCC 35469 / DSM 13698 / CCUG 18766 / IAM 14443 / JCM 21226 / LMG 7866 / NBRC 102419 / NCTC 12128 / CDC 0568-73).